The sequence spans 154 residues: Myoglobin (154 aa).

Residues 2 to 148 (GLSDGEWQLV…FRHDMAAKYK (147 aa)) form the Globin domain. At Ser-4 the chain carries Phosphoserine. Position 65 (His-65) interacts with nitrite. An O2-binding site is contributed by His-65. Thr-68 bears the Phosphothreonine mark. A heme b-binding site is contributed by His-94.

This sequence belongs to the globin family. In terms of assembly, monomeric.

Its subcellular location is the cytoplasm. It localises to the sarcoplasm. The enzyme catalyses Fe(III)-heme b-[protein] + nitric oxide + H2O = Fe(II)-heme b-[protein] + nitrite + 2 H(+). It catalyses the reaction H2O2 + AH2 = A + 2 H2O. Functionally, monomeric heme protein which primary function is to store oxygen and facilitate its diffusion within muscle tissues. Reversibly binds oxygen through a pentacoordinated heme iron and enables its timely and efficient release as needed during periods of heightened demand. Depending on the oxidative conditions of tissues and cells, and in addition to its ability to bind oxygen, it also has a nitrite reductase activity whereby it regulates the production of bioactive nitric oxide. Under stress conditions, like hypoxia and anoxia, it also protects cells against reactive oxygen species thanks to its pseudoperoxidase activity. In Osphranter rufus (Red kangaroo), this protein is Myoglobin (MB).